Here is a 167-residue protein sequence, read N- to C-terminus: Intermembrane phospholipid transport system binding protein MlaD (167 aa).

The Cytoplasmic segment spans residues 1-6; it reads MRQTIK. Residues 7-27 form a helical; Signal-anchor for type II membrane protein membrane-spanning segment; the sequence is YEFWVGLFLLLGIGALVFLGL. At 28 to 167 the chain is on the periplasmic side; it reads RVANVQGFAE…GNEKSESTEQ (140 aa). The interval 40 to 118 is MCE/MlaD; sequence SYTVTATFDN…GEQYIALTMG (79 aa).

This sequence belongs to the MlaD family. In terms of assembly, the complex is composed of two ATP-binding proteins (MlaF), two transmembrane proteins (MlaE), two cytoplasmic solute-binding proteins (MlaB) and six periplasmic solute-binding proteins (MlaD).

Its subcellular location is the cell inner membrane. In terms of biological role, part of the ABC transporter complex MlaFEDB, which is involved in a phospholipid transport pathway that maintains lipid asymmetry in the outer membrane by retrograde trafficking of phospholipids from the outer membrane to the inner membrane. MlaD functions in substrate binding with strong affinity for phospholipids and modulates ATP hydrolytic activity of the complex. The protein is Intermembrane phospholipid transport system binding protein MlaD of Haemophilus influenzae (strain ATCC 51907 / DSM 11121 / KW20 / Rd).